Here is a 433-residue protein sequence, read N- to C-terminus: Legumain (433 aa).

The N-terminal stretch at 1–17 (MVWKVAVFLSAALVIGA) is a signal peptide. A glycan (N-linked (GlcNAc...) asparagine) is linked at Asn-91. His-148 is an active-site residue. Residue Asn-167 is glycosylated (N-linked (GlcNAc...) asparagine). The active-site Nucleophile is Cys-189. Residues Asn-263 and Asn-272 are each glycosylated (N-linked (GlcNAc...) asparagine). Positions 324–433 (DLEESRQLTE…SMDHVCLGHY (110 aa)) are excised as a propeptide. Disulfide bonds link Cys-378–Cys-412 and Cys-390–Cys-429.

The protein belongs to the peptidase C13 family. As to quaternary structure, homodimer before autocatalytic removal of the propeptide. Monomer after autocatalytic processing. May interact with integrins. In terms of processing, activated by autocatalytic processing at pH 4.

The protein localises to the lysosome. The enzyme catalyses Hydrolysis of proteins and small molecule substrates at -Asn-|-Xaa- bonds.. Has a strict specificity for hydrolysis of asparaginyl bonds. Can also cleave aspartyl bonds slowly, especially under acidic conditions. Involved in the processing of proteins for MHC class II antigen presentation in the lysosomal/endosomal system. Also involved in MHC class I antigen presentation in cross-presenting dendritic cells by mediating cleavage and maturation of Perforin-2 (MPEG1), thereby promoting antigen translocation in the cytosol. Required for normal lysosomal protein degradation in renal proximal tubules. Required for normal degradation of internalized EGFR. Plays a role in the regulation of cell proliferation via its role in EGFR degradation. This Pongo abelii (Sumatran orangutan) protein is Legumain (LGMN).